The sequence spans 1165 residues: DNA-directed RNA polymerase subunit beta (1165 aa).

It belongs to the RNA polymerase beta chain family. As to quaternary structure, the RNAP catalytic core consists of 2 alpha, 1 beta, 1 beta' and 1 omega subunit. When a sigma factor is associated with the core the holoenzyme is formed, which can initiate transcription.

It carries out the reaction RNA(n) + a ribonucleoside 5'-triphosphate = RNA(n+1) + diphosphate. In terms of biological role, DNA-dependent RNA polymerase catalyzes the transcription of DNA into RNA using the four ribonucleoside triphosphates as substrates. The protein is DNA-directed RNA polymerase subunit beta of Corynebacterium glutamicum (strain ATCC 13032 / DSM 20300 / JCM 1318 / BCRC 11384 / CCUG 27702 / LMG 3730 / NBRC 12168 / NCIMB 10025 / NRRL B-2784 / 534).